We begin with the raw amino-acid sequence, 73 residues long: Methionyl-tRNA formyltransferase (73 aa).

It belongs to the Fmt family.

The catalysed reaction is L-methionyl-tRNA(fMet) + (6R)-10-formyltetrahydrofolate = N-formyl-L-methionyl-tRNA(fMet) + (6S)-5,6,7,8-tetrahydrofolate + H(+). In terms of biological role, attaches a formyl group to the free amino group of methionyl-tRNA(fMet). The formyl group appears to play a dual role in the initiator identity of N-formylmethionyl-tRNA by promoting its recognition by IF2 and preventing the misappropriation of this tRNA by the elongation apparatus. The protein is Methionyl-tRNA formyltransferase (fmt) of Rickettsia akari.